Consider the following 229-residue polypeptide: Enolase-phosphatase E1 (229 aa).

Residues 207–229 (RDPASHHPQVQRFDDIHPEQIPA) form a disordered region. Residues 218 to 229 (RFDDIHPEQIPA) are compositionally biased toward basic and acidic residues.

It belongs to the HAD-like hydrolase superfamily. MasA/MtnC family. In terms of assembly, monomer. It depends on Mg(2+) as a cofactor.

The enzyme catalyses 5-methylsulfanyl-2,3-dioxopentyl phosphate + H2O = 1,2-dihydroxy-5-(methylsulfanyl)pent-1-en-3-one + phosphate. The protein operates within amino-acid biosynthesis; L-methionine biosynthesis via salvage pathway; L-methionine from S-methyl-5-thio-alpha-D-ribose 1-phosphate: step 3/6. Its pathway is amino-acid biosynthesis; L-methionine biosynthesis via salvage pathway; L-methionine from S-methyl-5-thio-alpha-D-ribose 1-phosphate: step 4/6. Functionally, bifunctional enzyme that catalyzes the enolization of 2,3-diketo-5-methylthiopentyl-1-phosphate (DK-MTP-1-P) into the intermediate 2-hydroxy-3-keto-5-methylthiopentenyl-1-phosphate (HK-MTPenyl-1-P), which is then dephosphorylated to form the acireductone 1,2-dihydroxy-3-keto-5-methylthiopentene (DHK-MTPene). In Klebsiella pneumoniae subsp. pneumoniae (strain ATCC 700721 / MGH 78578), this protein is Enolase-phosphatase E1.